The primary structure comprises 138 residues: MAKAIPKISSRRNGRISSRKGARRIPKGVIHVQASFNNTIVTVTDVRGRVVSWSSAGTSGFKGTRRGTPFAAQTAAANAIRTVVDQGMQRAEVMIKGPGLGRDAALRAIRRSGILLTFVRDVTPMPHNGCRPPKKRRV.

Positions 1–22 (MAKAIPKISSRRNGRISSRKGA) are disordered. Basic residues predominate over residues 9–22 (SSRRNGRISSRKGA).

Belongs to the universal ribosomal protein uS11 family. In terms of assembly, part of the 30S ribosomal subunit.

The protein resides in the plastid. It localises to the chloroplast. The protein is Small ribosomal subunit protein uS11c of Solanum bulbocastanum (Wild potato).